A 403-amino-acid chain; its full sequence is Probable tRNA sulfurtransferase (403 aa).

The 106-residue stretch at 60-165 (QLAEERLKPI…KEGVFLSCRT (106 aa)) folds into the THUMP domain. Residues 183 to 184 (ML), 208 to 209 (HF), R265, G287, and Q296 contribute to the ATP site.

It belongs to the ThiI family.

The protein localises to the cytoplasm. It catalyses the reaction [ThiI sulfur-carrier protein]-S-sulfanyl-L-cysteine + a uridine in tRNA + 2 reduced [2Fe-2S]-[ferredoxin] + ATP + H(+) = [ThiI sulfur-carrier protein]-L-cysteine + a 4-thiouridine in tRNA + 2 oxidized [2Fe-2S]-[ferredoxin] + AMP + diphosphate. The enzyme catalyses [ThiS sulfur-carrier protein]-C-terminal Gly-Gly-AMP + S-sulfanyl-L-cysteinyl-[cysteine desulfurase] + AH2 = [ThiS sulfur-carrier protein]-C-terminal-Gly-aminoethanethioate + L-cysteinyl-[cysteine desulfurase] + A + AMP + 2 H(+). The protein operates within cofactor biosynthesis; thiamine diphosphate biosynthesis. Its function is as follows. Catalyzes the ATP-dependent transfer of a sulfur to tRNA to produce 4-thiouridine in position 8 of tRNAs, which functions as a near-UV photosensor. Also catalyzes the transfer of sulfur to the sulfur carrier protein ThiS, forming ThiS-thiocarboxylate. This is a step in the synthesis of thiazole, in the thiamine biosynthesis pathway. The sulfur is donated as persulfide by IscS. The protein is Probable tRNA sulfurtransferase of Listeria innocua serovar 6a (strain ATCC BAA-680 / CLIP 11262).